We begin with the raw amino-acid sequence, 32 residues long: Cypmaclein (32 aa).

The protein belongs to the GASA family. As to expression, expressed in pollen (at protein level).

The sequence is that of Cypmaclein from Cupressus sempervirens (Italian cypress).